The primary structure comprises 450 residues: Phosphoglucosamine mutase (450 aa).

Ser102 (phosphoserine intermediate) is an active-site residue. The Mg(2+) site is built by Ser102, Asp244, Asp246, and Asp248. Position 102 is a phosphoserine (Ser102).

It belongs to the phosphohexose mutase family. Mg(2+) serves as cofactor. Post-translationally, activated by phosphorylation.

The enzyme catalyses alpha-D-glucosamine 1-phosphate = D-glucosamine 6-phosphate. Catalyzes the conversion of glucosamine-6-phosphate to glucosamine-1-phosphate. The sequence is that of Phosphoglucosamine mutase from Desulfovibrio desulfuricans (strain ATCC 27774 / DSM 6949 / MB).